The following is a 279-amino-acid chain: Dehydrogenase/reductase SDR family member 4 (279 aa).

An NADP(+)-binding site is contributed by 37–61 (LVTASTDGIGLAIARRLAEDGAHVV). Position 93 is an N6-acetyllysine; alternate (lysine 93). Residue lysine 93 is modified to N6-succinyllysine; alternate. N6-acetyllysine is present on lysine 106. Serine 170 is a binding site for substrate. Residue tyrosine 183 is the Proton acceptor of the active site. Lysine 187 contributes to the NADP(+) binding site. Lysine 217 carries the post-translational modification N6-acetyllysine; alternate. Lysine 217 bears the N6-succinyllysine; alternate mark. Position 221 is a phosphoserine (serine 221). Residues lysine 228 and lysine 235 each carry the N6-succinyllysine modification. A Peroxisomal targeting signal motif is present at residues 277–279 (SRL).

Belongs to the short-chain dehydrogenases/reductases (SDR) family. As to quaternary structure, homotetramer.

The protein localises to the peroxisome. It carries out the reaction a secondary alcohol + NADP(+) = a ketone + NADPH + H(+). The catalysed reaction is 3alpha-hydroxy-5beta-pregnan-20-one + NADP(+) = 5beta-pregnan-3,20-dione + NADPH + H(+). It catalyses the reaction 5beta-dihydrotestosterone + NADPH + H(+) = 5beta-androstane-3alpha,17beta-diol + NADP(+). The enzyme catalyses all-trans-retinol + NADP(+) = all-trans-retinal + NADPH + H(+). It carries out the reaction isatin + NADPH + H(+) = 3-hydroxyindolin-2-one + NADP(+). In terms of biological role, NADPH-dependent oxidoreductase which catalyzes the reduction of a variety of compounds bearing carbonyl groups including ketosteroids, alpha-dicarbonyl compounds, aldehydes, aromatic ketones and quinones. Reduces all-trans-retinal and 9-cis retinal. Reduces 3-ketosteroids and benzil into 3alpha-hydroxysteroids and S-benzoin, respectively, in contrast to the stereoselectivity of primates DHRS4s which produce 3beta-hydroxysteroids and R-benzoin. In the reverse reaction, catalyzes the NADP-dependent oxidation of 3alpha-hydroxysteroids and alcohol, but with much lower efficiency. Involved in the metabolism of 3alpha-hydroxysteroids, retinoid, isatin and xenobiotic carbonyl compounds. In Rattus norvegicus (Rat), this protein is Dehydrogenase/reductase SDR family member 4 (Dhrs4).